Consider the following 306-residue polypeptide: Non-specific ribonucleoside hydrolase RihC (306 aa).

His235 is an active-site residue.

This sequence belongs to the IUNH family. RihC subfamily.

Hydrolyzes both purine and pyrimidine ribonucleosides with a broad-substrate specificity. The chain is Non-specific ribonucleoside hydrolase RihC from Salmonella typhi.